A 419-amino-acid chain; its full sequence is Structure-specific endonuclease subunit slx4 (419 aa).

The protein belongs to the SLX4 family. As to quaternary structure, forms a heterodimer with slx1. In terms of processing, phosphorylated in response to DNA damage.

The protein localises to the nucleus. The protein resides in the nucleolus. In terms of biological role, regulatory subunit of the slx1-slx4 structure-specific endonuclease that resolves DNA secondary structures generated during DNA repair and recombination. Has endonuclease activity towards branched DNA substrates, introducing single-strand cuts in duplex DNA close to junctions with ss-DNA. Has a preference for stem-loop (SL) and splayed arm Y structures. Introduces a single-strand cut in duplex DNA on the 3' side of a double-strand/single-strand junction with respect to the single-strand moving 3' to 5' away from the junction. Plays a critical role in maintaining the integrity of the ribosomal DNA (rDNA) loci, where it has a role in re-starting stalled replication forks. The complex initiates homologous recombination (HR) events, used to maintain rDNA copy number, in the rDNA repeats that are processed by a mechanism that requires rad22, but not rhp51. Has Holliday junction resolvase activity in vitro. Slx4 is required for efficient processing of DNA substrates. The protein is Structure-specific endonuclease subunit slx4 of Schizosaccharomyces pombe (strain 972 / ATCC 24843) (Fission yeast).